The chain runs to 405 residues: Histone deacetylase clr6 (405 aa).

The segment at lysine 6–glycine 318 is histone deacetylase. Histidine 138 is an active-site residue.

Belongs to the histone deacetylase family. HD type 1 subfamily. In terms of assembly, heterotetramer of alp13, clr6, prw1 and pst2.

It is found in the nucleus. The enzyme catalyses N(6)-acetyl-L-lysyl-[histone] + H2O = L-lysyl-[histone] + acetate. Responsible for the deacetylation of lysine residues on the N-terminal part of the core histones (H2A, H2B, H3 and H4). Histone deacetylation gives a tag for epigenetic repression and plays an important role in transcriptional regulation, cell cycle progression and developmental events. Histone deacetylases act via the formation of large multiprotein complexes. Has a role in chromatin assembly and chromosome segregation. This Schizosaccharomyces pombe (strain 972 / ATCC 24843) (Fission yeast) protein is Histone deacetylase clr6 (clr6).